Consider the following 856-residue polypeptide: Leucine--tRNA ligase (856 aa).

Residues 53-63 carry the 'HIGH' region motif; that stretch reads PYPSGNLHMGH. Residues 622-626 carry the 'KMSKS' region motif; that stretch reads KMSKS. Lys-625 lines the ATP pocket.

Belongs to the class-I aminoacyl-tRNA synthetase family.

It localises to the cytoplasm. The enzyme catalyses tRNA(Leu) + L-leucine + ATP = L-leucyl-tRNA(Leu) + AMP + diphosphate. The chain is Leucine--tRNA ligase from Prochlorococcus marinus (strain AS9601).